The sequence spans 353 residues: Melanin-concentrating hormone receptor 1 (353 aa).

The segment at 1–29 is disordered; it reads MDLEASLLPTGPNASNTSDGPDNLTSAGS. Residues 1 to 44 lie on the Extracellular side of the membrane; that stretch reads MDLEASLLPTGPNASNTSDGPDNLTSAGSPPRTGSISYINIIMP. Over residues 12 to 29 the composition is skewed to polar residues; sequence PNASNTSDGPDNLTSAGS. 3 N-linked (GlcNAc...) asparagine glycosylation sites follow: Asn13, Asn16, and Asn23. A helical transmembrane segment spans residues 45-67; sequence SVFGTICLLGIIGNSTVIFAVVK. The Cytoplasmic segment spans residues 68-79; it reads KSKLHWCNNVPD. The chain crosses the membrane as a helical span at residues 80–102; that stretch reads IFIINLSVVDLLFLLGMPFMIHQ. Topologically, residues 103–116 are extracellular; that stretch reads LMGNGVWHFGETMC. A disulfide bridge connects residues Cys116 and Cys194. Residues 117–139 traverse the membrane as a helical segment; sequence TLITAMDANSQFTSTYILTAMAI. At 140–158 the chain is on the cytoplasmic side; sequence DRYLATVHPISSTKFRKPS. A helical transmembrane segment spans residues 159-181; sequence VATLVICLLWALSFISITPVWLY. Topologically, residues 182 to 209 are extracellular; it reads ARLIPFPGGAVGCGIRLPNPDTDLYWFT. Residues 210-232 traverse the membrane as a helical segment; that stretch reads LYQFFLAFALPFVVITAAYVRIL. Residues 233–252 lie on the Cytoplasmic side of the membrane; that stretch reads QRMTSSVAPASQRSIRLRTK. The chain crosses the membrane as a helical span at residues 253 to 275; sequence RVTRTAIAICLVFFVCWAPYYVL. Topologically, residues 276–289 are extracellular; sequence QLTQLSISRPTLTF. Residues 290 to 312 form a helical membrane-spanning segment; that stretch reads VYLYNAAISLGYANSCLNPFVYI. Over 313–353 the chain is Cytoplasmic; it reads VLCETFRKRLVLSVKPAAQGQLRAVSNAQTADEERTESKGT.

It belongs to the G-protein coupled receptor 1 family. Interacts with NCDN. In terms of tissue distribution, highest level in brain, particularly in the frontal cortex and hypothalamus, lower levels in the liver and heart.

The protein localises to the cell membrane. Its function is as follows. Receptor for melanin-concentrating hormone, coupled to both G proteins that inhibit adenylyl cyclase and G proteins that activate phosphoinositide hydrolysis. This Homo sapiens (Human) protein is Melanin-concentrating hormone receptor 1.